A 345-amino-acid chain; its full sequence is Phosphoribosylformylglycinamidine cyclo-ligase (345 aa).

It belongs to the AIR synthase family.

The protein localises to the cytoplasm. It carries out the reaction 2-formamido-N(1)-(5-O-phospho-beta-D-ribosyl)acetamidine + ATP = 5-amino-1-(5-phospho-beta-D-ribosyl)imidazole + ADP + phosphate + H(+). Its pathway is purine metabolism; IMP biosynthesis via de novo pathway; 5-amino-1-(5-phospho-D-ribosyl)imidazole from N(2)-formyl-N(1)-(5-phospho-D-ribosyl)glycinamide: step 2/2. This chain is Phosphoribosylformylglycinamidine cyclo-ligase, found in Shewanella woodyi (strain ATCC 51908 / MS32).